Here is a 342-residue protein sequence, read N- to C-terminus: Bifunctional terpene synthase Agr4 (342 aa).

Asp-87, Asn-222, Ser-226, and Glu-230 together coordinate Mg(2+). The short motif at 87-91 (DEVSD) is the DDXXD motif element. (2E,6E)-farnesyl diphosphate is bound by residues Arg-308 and Tyr-309.

The protein belongs to the terpene synthase family. Requires Mg(2+) as cofactor.

It catalyses the reaction (2E,6E)-farnesyl diphosphate = delta-cadinene + diphosphate. The enzyme catalyses (2E,6E)-farnesyl diphosphate = gamma-muurolene + diphosphate. It carries out the reaction (2E,6E)-farnesyl diphosphate = beta-copaene + diphosphate. The catalysed reaction is (2E)-geranyl diphosphate = beta-myrcene + diphosphate. Terpene cyclase that catalyzes the cyclization of farnesyl diphosphate (FPP) to various sesquiterpenes, including beta-copaene, alpha-cubebene, cadina-1(6),4-diene, gamma-muurolene, delta-cadinene, epizonarene, epicubenol and cubenol. Agr4 is also able to use the monoterpene precursor geranyl diphosphate (GPP) as substrates to synthesize the monoterpene beta-myrcene. Delta-cadinene is the major product of Agr4. The chain is Bifunctional terpene synthase Agr4 from Cyclocybe aegerita (Black poplar mushroom).